Here is a 142-residue protein sequence, read N- to C-terminus: Ribosome-binding factor A (142 aa).

Residues 119–142 (EAKQKQHGVETDAEQGETKDEGDK) form a disordered region.

Belongs to the RbfA family. Monomer. Binds 30S ribosomal subunits, but not 50S ribosomal subunits or 70S ribosomes.

It is found in the cytoplasm. Its function is as follows. One of several proteins that assist in the late maturation steps of the functional core of the 30S ribosomal subunit. Associates with free 30S ribosomal subunits (but not with 30S subunits that are part of 70S ribosomes or polysomes). Required for efficient processing of 16S rRNA. May interact with the 5'-terminal helix region of 16S rRNA. This Shewanella halifaxensis (strain HAW-EB4) protein is Ribosome-binding factor A.